The sequence spans 307 residues: Putative F-box/LRR-repeat protein 22 (307 aa).

The span at 1–15 (MVTSSSSPPLATSQL) shows a compositional bias: polar residues. The tract at residues 1–26 (MVTSSSSPPLATSQLPVMKGEEKPSN) is disordered. One can recognise an F-box domain in the interval 24–71 (PSNWAELPPDLLSSILLRLSPLEILENARKVCRSWRRVSKDPLIWRRI). LRR repeat units follow at residues 108 to 133 (WRFQ…RVKG), 158 to 183 (YCSI…KLVG), 185 to 210 (WSHL…HLQL), 212 to 237 (SNGL…DLRQ), and 244 to 270 (FGDL…DYNY). Acidic residues predominate over residues 279 to 289 (IEDEKGEEEEN). The disordered stretch occupies residues 279–307 (IEDEKGEEEENYSYGSDDTEYGYRRSADF).

The sequence is that of Putative F-box/LRR-repeat protein 22 (FBL22) from Arabidopsis thaliana (Mouse-ear cress).